A 2415-amino-acid chain; its full sequence is Spectrin alpha chain (2415 aa).

Spectrin repeat units follow at residues 48-150 (RFQY…KLQQ), 154-254 (LVQF…QEKL), 258-362 (HEIQ…KLDE), 366-464 (LHRF…DRRI), 471-574 (DLQL…LLED), 577-679 (RYQQ…KLNE), 683-784 (QQQF…QHLL), 788-890 (QVQQ…QDLD), and 894-963 (QAHQ…RQQE). Residues 970–1029 (TGKECVVALYDYTEKSPREVSMKKGDVLTLLNSNNKDWWKVEVNDRQGFVPAAYIKKIDA) enclose the SH3 domain. A phosphoserine mark is found at Ser1032 and Ser1034. Spectrin repeat units follow at residues 1079 to 1177 (VREA…ASQL), 1181 to 1284 (HEVQ…EKLL), 1287 to 1391 (YDLQ…QLEQ), 1394 to 1496 (DLQL…SRLG), 1500 to 1604 (TLQQ…KLKE), 1608 to 1710 (QRTY…RLNE), 1714 to 1816 (LHQF…KLDE), 1820 to 1921 (YQQF…GALL), 1926 to 2028 (YLQF…DRLL), 2040 to 2141 (LYLT…DGEL), and 2154 to 2252 (LRKE…NLEQ). EF-hand domains lie at 2265–2300 (DSLKEFSMMFKHFDKDKSGKLNHQEFKSCLRALGYD) and 2308–2343 (QPDPEFEAILDVVDPNRDGYVSLQEYIAFMISKETE). Asp2278, Asp2280, Ser2282, Lys2284, Glu2289, Asp2321, Asn2323, Asp2325, Tyr2327, and Glu2332 together coordinate Ca(2+).

This sequence belongs to the spectrin family. Native spectrin molecule is a tetramer composed of two antiparallel heterodimers joined head to head so that each end of the native molecule includes the C-terminus of the alpha subunit and the N-terminus of the beta subunit. Interacts with calmodulin in a calcium-dependent manner, interacts with F-actin and also interacts with Lva. Interacts with Ten-m. As to expression, a substantial pool of maternal protein in the egg undergoes dynamic changes in distribution early in embryogenesis. In gastrulated embryo, the highest level of protein is found in the respiratory tract cells and the lowest in parts of the forming gut.

It localises to the cytoplasm. Its subcellular location is the cytoskeleton. The protein localises to the golgi apparatus. It is found in the cell projection. The protein resides in the cilium. It localises to the flagellum. Spectrin is the major constituent of the cytoskeletal network underlying the erythrocyte plasma membrane. It associates with band 4.1 and actin to form the cytoskeletal superstructure of the erythrocyte plasma membrane. Essential for larval survival and development. Stabilizes cell to cell interactions that are critical for the maintenance of cell shape and subcellular organization within embryonic tissues. Lva and spectrin may form a Golgi-based scaffold that mediates interaction of Golgi bodies with microtubules and facilitates Golgi-derived membrane secretion required for the formation of furrows during cellularization. The chain is Spectrin alpha chain (alpha-Spec) from Drosophila melanogaster (Fruit fly).